The primary structure comprises 314 residues: Fumarylacetoacetate hydrolase domain-containing protein 2 (314 aa).

A divalent metal cation is bound by residues Glu159, Glu161, and Asp190. Lys203 bears the N6-acetyllysine; alternate mark. Lys203 carries the N6-succinyllysine; alternate modification. Lys234 bears the N6-acetyllysine mark.

The protein belongs to the FAH family. Ca(2+) is required as a cofactor. The cofactor is Mg(2+).

Its function is as follows. May have hydrolase activity. The sequence is that of Fumarylacetoacetate hydrolase domain-containing protein 2 (FAHD2) from Pongo abelii (Sumatran orangutan).